We begin with the raw amino-acid sequence, 448 residues long: Phosphohexose mutases (448 aa).

S97 serves as the catalytic Phosphoserine intermediate. Residues S97, D237, D239, and D241 each contribute to the Mg(2+) site.

It belongs to the phosphohexose mutase family. The cofactor is Mg(2+).

It catalyses the reaction alpha-D-glucose 1-phosphate = alpha-D-glucose 6-phosphate. It carries out the reaction alpha-D-mannose 1-phosphate = D-mannose 6-phosphate. Its pathway is nucleotide-sugar biosynthesis; GDP-alpha-D-mannose biosynthesis; alpha-D-mannose 1-phosphate from D-fructose 6-phosphate: step 2/2. In terms of biological role, involved in xanthan production. This Xanthomonas campestris pv. campestris (strain B100) protein is Phosphohexose mutases (xanA).